We begin with the raw amino-acid sequence, 277 residues long: uncharacterized protein (277 aa).

The protein belongs to the BtpA family.

It is found in the mitochondrion. This is an uncharacterized protein from Caenorhabditis elegans.